The primary structure comprises 186 residues: UPF0340 protein M6_Spy1622 (186 aa).

This sequence belongs to the UPF0340 family.

This Streptococcus pyogenes serotype M6 (strain ATCC BAA-946 / MGAS10394) protein is UPF0340 protein M6_Spy1622.